Consider the following 63-residue polypeptide: Large ribosomal subunit protein uL29 (63 aa).

The protein belongs to the universal ribosomal protein uL29 family.

This is Large ribosomal subunit protein uL29 from Photobacterium profundum (strain SS9).